Reading from the N-terminus, the 471-residue chain is Argininosuccinate lyase (471 aa).

Belongs to the lyase 1 family. Argininosuccinate lyase subfamily.

It localises to the cytoplasm. It catalyses the reaction 2-(N(omega)-L-arginino)succinate = fumarate + L-arginine. It functions in the pathway amino-acid biosynthesis; L-arginine biosynthesis; L-arginine from L-ornithine and carbamoyl phosphate: step 3/3. The chain is Argininosuccinate lyase from Paramagnetospirillum magneticum (strain ATCC 700264 / AMB-1) (Magnetospirillum magneticum).